A 278-amino-acid polypeptide reads, in one-letter code: Large ribosomal subunit protein uL2 (278 aa).

The interval 201 to 278 is disordered; sequence HGNINDGKAG…IMRSRHQKKK (78 aa). Positions 210 to 221 are enriched in basic residues; it reads GRSRWRGKRPHV.

Belongs to the universal ribosomal protein uL2 family. Part of the 50S ribosomal subunit. Forms a bridge to the 30S subunit in the 70S ribosome.

Its function is as follows. One of the primary rRNA binding proteins. Required for association of the 30S and 50S subunits to form the 70S ribosome, for tRNA binding and peptide bond formation. It has been suggested to have peptidyltransferase activity; this is somewhat controversial. Makes several contacts with the 16S rRNA in the 70S ribosome. This Allorhizobium ampelinum (strain ATCC BAA-846 / DSM 112012 / S4) (Agrobacterium vitis (strain S4)) protein is Large ribosomal subunit protein uL2.